Consider the following 441-residue polypeptide: Serine carboxypeptidase-like 1 (441 aa).

An N-terminal signal peptide occupies residues 1-29 (MANKYVSSVLKSLLVLLHLVFLSKQHVDS). Disulfide bonds link cysteine 88–cysteine 331, cysteine 252–cysteine 266, and cysteine 290–cysteine 297. N-linked (GlcNAc...) asparagine glycosylation is present at asparagine 109. Residue serine 184 is part of the active site. Asparagine 350 carries an N-linked (GlcNAc...) asparagine glycan. Aspartate 366 is an active-site residue. Asparagine 382 carries N-linked (GlcNAc...) asparagine glycosylation. Histidine 419 is an active-site residue.

This sequence belongs to the peptidase S10 family. As to expression, expressed in seedlings and roots.

It is found in the secreted. In terms of biological role, probable carboxypeptidase. The sequence is that of Serine carboxypeptidase-like 1 (SCPL1) from Arabidopsis thaliana (Mouse-ear cress).